We begin with the raw amino-acid sequence, 154 residues long: Snaclec EMS16 subunit beta (154 aa).

The N-terminal stretch at 1–26 (MGRLISVRFSLLVVFLSLSGIGAGLC) is a signal peptide. Cysteine 27 and cysteine 38 are oxidised to a cystine. Positions 34-147 (FDQHCYKVFE…CEKSVSFVCK (114 aa)) constitute a C-type lectin domain. Asparagine 47 carries an N-linked (GlcNAc...) asparagine glycan. 2 disulfides stabilise this stretch: cysteine 55/cysteine 146 and cysteine 121/cysteine 138.

It belongs to the snaclec family. As to quaternary structure, heterodimer of subunits A and B; disulfide-linked. Expressed by the venom gland.

It localises to the secreted. Functionally, EMS16 is a potent and selective inhibitor of alpha-2/beta-1 (ITGA2/ITGB1) integrin and acts as a potent antagonist of platelet aggregation and cell migration. Binds specifically to the I domain of the alpha-2 subunit, in a metal ion-independent fashion. The protein is Snaclec EMS16 subunit beta of Echis multisquamatus (Central Asian sand viper).